The sequence spans 192 residues: Flavin prenyltransferase UbiX (192 aa).

FMN-binding positions include 10–12, S36, 92–95, and R127; these read GAS and SVAT. Dimethylallyl phosphate is bound by residues Y157 and K173.

The protein belongs to the UbiX/PAD1 family.

The enzyme catalyses dimethylallyl phosphate + FMNH2 = prenylated FMNH2 + phosphate. Flavin prenyltransferase that catalyzes the synthesis of the prenylated FMN cofactor (prenyl-FMN) for 4-hydroxy-3-polyprenylbenzoic acid decarboxylase UbiD. The prenyltransferase is metal-independent and links a dimethylallyl moiety from dimethylallyl monophosphate (DMAP) to the flavin N5 and C6 atoms of FMN. The sequence is that of Flavin prenyltransferase UbiX from Chlamydia muridarum (strain MoPn / Nigg).